The primary structure comprises 253 residues: 5'/3'-nucleotidase SurE (253 aa).

Positions 8, 9, 39, and 92 each coordinate a divalent metal cation.

It belongs to the SurE nucleotidase family. A divalent metal cation serves as cofactor.

The protein localises to the cytoplasm. The catalysed reaction is a ribonucleoside 5'-phosphate + H2O = a ribonucleoside + phosphate. It carries out the reaction a ribonucleoside 3'-phosphate + H2O = a ribonucleoside + phosphate. It catalyses the reaction [phosphate](n) + H2O = [phosphate](n-1) + phosphate + H(+). Its function is as follows. Nucleotidase with a broad substrate specificity as it can dephosphorylate various ribo- and deoxyribonucleoside 5'-monophosphates and ribonucleoside 3'-monophosphates with highest affinity to 3'-AMP. Also hydrolyzes polyphosphate (exopolyphosphatase activity) with the preference for short-chain-length substrates (P20-25). Might be involved in the regulation of dNTP and NTP pools, and in the turnover of 3'-mononucleotides produced by numerous intracellular RNases (T1, T2, and F) during the degradation of various RNAs. In Escherichia coli O127:H6 (strain E2348/69 / EPEC), this protein is 5'/3'-nucleotidase SurE.